Here is a 344-residue protein sequence, read N- to C-terminus: Arginine N-succinyltransferase (344 aa).

Position 125 (leucine 125) interacts with succinyl-CoA. Histidine 229 (proton donor) is an active-site residue.

The protein belongs to the arginine N-succinyltransferase family.

The enzyme catalyses succinyl-CoA + L-arginine = N(2)-succinyl-L-arginine + CoA + H(+). It participates in amino-acid degradation; L-arginine degradation via AST pathway; L-glutamate and succinate from L-arginine: step 1/5. In terms of biological role, catalyzes the transfer of succinyl-CoA to arginine to produce N(2)-succinylarginine. This Escherichia fergusonii (strain ATCC 35469 / DSM 13698 / CCUG 18766 / IAM 14443 / JCM 21226 / LMG 7866 / NBRC 102419 / NCTC 12128 / CDC 0568-73) protein is Arginine N-succinyltransferase.